A 343-amino-acid chain; its full sequence is Dihydroorotase (343 aa).

Zn(2+) contacts are provided by histidine 14 and histidine 16. Substrate is bound by residues 16–18 (HLR) and asparagine 42. Residues lysine 100, histidine 137, and histidine 175 each contribute to the Zn(2+) site. Lysine 100 is modified (N6-carboxylysine). Residue histidine 137 participates in substrate binding. Position 220 (leucine 220) interacts with substrate. Aspartate 248 is a binding site for Zn(2+). Residue aspartate 248 is part of the active site. Histidine 252 and alanine 264 together coordinate substrate.

The protein belongs to the metallo-dependent hydrolases superfamily. DHOase family. Class II DHOase subfamily. Homodimer. The cofactor is Zn(2+).

The catalysed reaction is (S)-dihydroorotate + H2O = N-carbamoyl-L-aspartate + H(+). It participates in pyrimidine metabolism; UMP biosynthesis via de novo pathway; (S)-dihydroorotate from bicarbonate: step 3/3. Catalyzes the reversible cyclization of carbamoyl aspartate to dihydroorotate. The chain is Dihydroorotase from Synechococcus sp. (strain CC9902).